The primary structure comprises 658 residues: Exoribonuclease 2 (658 aa).

One can recognise an RNB domain in the interval 189–530 (REDLTSLYFT…VNHRLIKQVL (342 aa)). An S1 motif domain is found at 576–658 (AVEFDCEIAD…ETRSIVGNII (83 aa)).

It belongs to the RNR ribonuclease family. RNase II subfamily.

The protein localises to the cytoplasm. It carries out the reaction Exonucleolytic cleavage in the 3'- to 5'-direction to yield nucleoside 5'-phosphates.. Its function is as follows. Involved in mRNA degradation. Hydrolyzes single-stranded polyribonucleotides processively in the 3' to 5' direction. In Actinobacillus pleuropneumoniae serotype 3 (strain JL03), this protein is Exoribonuclease 2.